A 316-amino-acid chain; its full sequence is PHD finger protein 20-like protein 1 (316 aa).

The Tudor 1 domain maps to isoleucine 11 to proline 71. Residues lysine 75 and lysine 79 each participate in a glycyl lysine isopeptide (Lys-Gly) (interchain with G-Cter in SUMO2) cross-link. The 57-residue stretch at phenylalanine 85 to lysine 141 folds into the Tudor 2 domain. The segment at alanine 183 to serine 237 is disordered. Over residues lysine 186 to serine 197 the composition is skewed to polar residues. The segment covering asparagine 198–threonine 218 has biased composition (basic and acidic residues).

As to quaternary structure, interacts with methylated DNMT1 (DNMT1K142me1). Interacts with SOX2.

The protein resides in the nucleus. Its function is as follows. Is a negative regulator of proteasomal degradation of a set of methylated proteins, including DNMT1 and SOX2. Involved in the maintainance of embryonic stem cells pluripotency, through the regulation of SOX2 levels. The polypeptide is PHD finger protein 20-like protein 1 (PHF20L1) (Bos taurus (Bovine)).